The primary structure comprises 103 residues: Urease subunit beta (103 aa).

This sequence belongs to the urease beta subunit family. In terms of assembly, heterotrimer of UreA (gamma), UreB (beta) and UreC (alpha) subunits. Three heterotrimers associate to form the active enzyme.

Its subcellular location is the cytoplasm. The catalysed reaction is urea + 2 H2O + H(+) = hydrogencarbonate + 2 NH4(+). The protein operates within nitrogen metabolism; urea degradation; CO(2) and NH(3) from urea (urease route): step 1/1. The chain is Urease subunit beta from Blochmanniella floridana.